Here is a 503-residue protein sequence, read N- to C-terminus: UDP-N-acetylmuramoylalanine--D-glutamate ligase (503 aa).

Gly129–Thr135 contacts ATP. The interval Asp284–Ala305 is disordered.

Belongs to the MurCDEF family.

It is found in the cytoplasm. The enzyme catalyses UDP-N-acetyl-alpha-D-muramoyl-L-alanine + D-glutamate + ATP = UDP-N-acetyl-alpha-D-muramoyl-L-alanyl-D-glutamate + ADP + phosphate + H(+). Its pathway is cell wall biogenesis; peptidoglycan biosynthesis. In terms of biological role, cell wall formation. Catalyzes the addition of glutamate to the nucleotide precursor UDP-N-acetylmuramoyl-L-alanine (UMA). The chain is UDP-N-acetylmuramoylalanine--D-glutamate ligase from Cupriavidus pinatubonensis (strain JMP 134 / LMG 1197) (Cupriavidus necator (strain JMP 134)).